The sequence spans 425 residues: Pleckstrin homology domain-containing family A member 2 (425 aa).

A PH 1 domain is found at 7–113 (QNRICGFLDI…WVEALNQASK (107 aa)). K141 is covalently cross-linked (Glycyl lysine isopeptide (Lys-Gly) (interchain with G-Cter in SUMO2)). S184 is modified (phosphoserine). In terms of domain architecture, PH 2 spans 198–298 (PLIKSGYCVK…WIKEIGAAVQ (101 aa)). Residues 312–330 (SISLTRPGSSSLSSGPNSI) are compositionally biased toward low complexity. The segment at 312–332 (SISLTRPGSSSLSSGPNSILC) is disordered. Phosphoserine occurs at positions 314 and 349. Residues 352-425 (SSWQPWTPVP…DDENIRTSDV (74 aa)) are disordered. A compositionally biased stretch (basic and acidic residues) spans 400 to 410 (RSEPQHPKEKP).

As to quaternary structure, binds MPDZ and PTPN13. As to expression, highly expressed in heart, kidney, spleen and peripheral blood leukocytes. Detected at lower levels in brain, skeletal muscle, colon, thymus, liver, small intestine, placenta and lung.

It is found in the cytoplasm. Its subcellular location is the cell membrane. The protein resides in the nucleus. Binds specifically to phosphatidylinositol 3,4-diphosphate (PtdIns3,4P2), but not to other phosphoinositides. May recruit other proteins to the plasma membrane. This is Pleckstrin homology domain-containing family A member 2 (PLEKHA2) from Homo sapiens (Human).